A 147-amino-acid chain; its full sequence is MSEELQPVFSIERLYVKDLSLEVPHAPQIFLEQGEPEVEMRVSTGSQKLEDGYYNVDVTVTVTAKLDNERTMFLNEVTQSGIFRLENIPEEDADLLLGVACPNILFPYAREAVSGTVTRAGFPPVLLAPINFEAIYQQQQEAEAAGA.

It belongs to the SecB family. In terms of assembly, homotetramer, a dimer of dimers. One homotetramer interacts with 1 SecA dimer.

It localises to the cytoplasm. In terms of biological role, one of the proteins required for the normal export of preproteins out of the cell cytoplasm. It is a molecular chaperone that binds to a subset of precursor proteins, maintaining them in a translocation-competent state. It also specifically binds to its receptor SecA. The protein is Protein-export protein SecB of Neisseria meningitidis serogroup B (strain ATCC BAA-335 / MC58).